The primary structure comprises 170 residues: Protein SprT (170 aa).

Positions Q23–F164 constitute a SprT-like domain. H78 lines the Zn(2+) pocket. E79 is a catalytic residue. Residue H82 coordinates Zn(2+).

Belongs to the SprT family. Requires Zn(2+) as cofactor.

It is found in the cytoplasm. In Serratia proteamaculans (strain 568), this protein is Protein SprT.